We begin with the raw amino-acid sequence, 897 residues long: Macoilin (897 aa).

4 helical membrane-spanning segments follow: residues 113-133, 157-177, 181-201, and 204-224; these read ICYLFIPIRMLIFLATTYVWI, QSWPIVFITCFIVIFELFLRI, PILISFFPNVAEYAGVSPVWP, and LNAFFGAHSIGYPVILITVSM. 2 stretches are compositionally biased toward polar residues: residues 291-304 and 329-338; these read IQAASATPPTSSKK and GNSGFNSTPP. The tract at residues 291–375 is disordered; that stretch reads IQAASATPPT…DTSSSTIEDQ (85 aa). Residues 351 to 361 are compositionally biased toward acidic residues; that stretch reads DMDDGDDSDDD. A helical membrane pass occupies residues 379 to 399; sequence GGISIIRFIFSSAAWLFSFVF. Over residues 403 to 413 the composition is skewed to polar residues; sequence TPSENSLSNQQ. 2 disordered regions span residues 403–535 and 724–770; these read TPSE…QEED and NGSS…SPVP. Acidic residues predominate over residues 414–424; that stretch reads IDDDEDYEDGD. The span at 432–451 shows a compositional bias: polar residues; that stretch reads TDSMTSTTKGRANTMPSTTR. 2 stretches are compositionally biased toward low complexity: residues 452 to 467 and 475 to 490; these read SQNNNNSQKQQKQSNG and SHQNNHQKSNGNSNGH. Residues 503–726 are a coiled coil; it reads DTNASNETDI…VQEFQIKNGS (224 aa). A compositionally biased stretch (basic and acidic residues) spans 510-535; it reads TDIRSMSRELESLRSEISSRRSQEED. Residues 734 to 761 are compositionally biased toward polar residues; that stretch reads ETLMNGRSSTEANNENDTTASDQSSPHQ.

As to expression, strong expression in many neurons, very weak expression is also detected in others tissues.

Its subcellular location is the rough endoplasmic reticulum membrane. The protein localises to the nucleus membrane. Functionally, plays a role in the regulation of neuronal activity. In AWA and AWC neurons, plays a role in regulating olfactory adaptation by controlling the forgetting sensory responses to odorants such as diacetyl and isoamyl alcohol. May play a role in regulating daf-7 expression in ASI neurons in response to bacterial small RNAs. In ASI neurons, promotes dauer formation in response to pheromones such as the ascarosides ascr#2 and ascr#3. The protein is Macoilin of Caenorhabditis elegans.